Consider the following 276-residue polypeptide: Fructoselysine 3-epimerase (276 aa).

Glu148 (proton donor/acceptor) is an active-site residue. 4 residues coordinate a divalent metal cation: Glu148, Asp181, His207, and Glu247. The active-site Proton donor/acceptor is the Glu247.

The protein belongs to the FrlC family. In terms of assembly, homooctamer. The cofactor is a divalent metal cation.

It catalyses the reaction N(6)-(D-psicosyl)-L-lysine = N(6)-(D-fructosyl)-L-lysine. In terms of biological role, catalyzes the reversible interconversion of fructoselysine with its C-3 epimer, psicoselysine. May allow S.flexneri to utilize psicoselysine for growth. In Shigella flexneri, this protein is Fructoselysine 3-epimerase (frlC).